The sequence spans 120 residues: Immunoglobulin kappa variable 2-112 (120 aa).

The signal sequence occupies residues 1-20 (MRCSLQFLGVLMFWISGVSG). Positions 21–43 (DIVITQDELSNPVTSGESVSISC) are framework-1. Cysteines 43 and 113 form a disulfide. Residues 44–59 (RSSKSLLYKDGKTYLN) are complementarity-determining-1. Residues 60 to 74 (WFLQRPGQSPQLLIY) are framework-2. Positions 75 to 81 (LMSTRAS) are complementarity-determining-2. The tract at residues 82–113 (GVSDRFSGSGSGTDFTLEISRVKAEDVGVYYC) is framework-3. The tract at residues 114-120 (QQLVEYP) is complementarity-determining-3.

The chain is Immunoglobulin kappa variable 2-112 from Mus musculus (Mouse).